The primary structure comprises 877 residues: DNA polymerase I (877 aa).

Residues 180-272 (TPSQFIDLKA…GLEDTLLKEK (93 aa)) enclose the 5'-3' exonuclease domain. The 3'-5' exonuclease domain occupies 312 to 468 (FEIVTDKSSV…AKEKMMAELI (157 aa)).

Belongs to the DNA polymerase type-A family. As to quaternary structure, single-chain monomer with multiple functions.

It catalyses the reaction DNA(n) + a 2'-deoxyribonucleoside 5'-triphosphate = DNA(n+1) + diphosphate. In addition to polymerase activity, this DNA polymerase exhibits 3'-5' and 5'-3' exonuclease activity. The chain is DNA polymerase I (polA) from Lactococcus lactis subsp. cremoris (strain MG1363).